We begin with the raw amino-acid sequence, 348 residues long: Doublesex- and mab-3-related transcription factor dmd-10 (348 aa).

2 consecutive DNA-binding regions (DM) follow at residues 43-91 (CQRC…YNQF) and 119-166 (CQKC…KIRR). Residues 316 to 348 (SMSMSSSPSKDDESGDEDSDGLNSNSIIDVITV) are disordered.

This sequence belongs to the DMRT family. In terms of tissue distribution, dimorphically expressed in the dimorphically connected interneuron AVG; expression is observed in the AVG in males, but not in hermaphrodites.

The protein resides in the nucleus. Functionally, transcription factor. Plays a role in neuronal signaling in polymodal sensory neuron ASH, downstream of sensory receptor activation. Required for maintenance of AVG synapses. The sequence is that of Doublesex- and mab-3-related transcription factor dmd-10 from Caenorhabditis elegans.